The primary structure comprises 104 residues: Large ribosomal subunit protein uL24 (104 aa).

Belongs to the universal ribosomal protein uL24 family. As to quaternary structure, part of the 50S ribosomal subunit.

Functionally, one of two assembly initiator proteins, it binds directly to the 5'-end of the 23S rRNA, where it nucleates assembly of the 50S subunit. Its function is as follows. One of the proteins that surrounds the polypeptide exit tunnel on the outside of the subunit. This Bartonella quintana (strain Toulouse) (Rochalimaea quintana) protein is Large ribosomal subunit protein uL24.